The sequence spans 162 residues: Putative 4-hydroxy-4-methyl-2-oxoglutarate aldolase (162 aa).

Substrate is bound by residues G75–L78 and R97. Position 98 (D98) interacts with a divalent metal cation.

This sequence belongs to the class II aldolase/RraA-like family. In terms of assembly, homotrimer. It depends on a divalent metal cation as a cofactor.

The enzyme catalyses 4-hydroxy-4-methyl-2-oxoglutarate = 2 pyruvate. It carries out the reaction oxaloacetate + H(+) = pyruvate + CO2. In terms of biological role, catalyzes the aldol cleavage of 4-hydroxy-4-methyl-2-oxoglutarate (HMG) into 2 molecules of pyruvate. Also contains a secondary oxaloacetate (OAA) decarboxylase activity due to the common pyruvate enolate transition state formed following C-C bond cleavage in the retro-aldol and decarboxylation reactions. This is Putative 4-hydroxy-4-methyl-2-oxoglutarate aldolase from Pseudomonas aeruginosa (strain LESB58).